The following is a 288-amino-acid chain: Ankyrin repeat and SOCS box protein 8 (288 aa).

Residue Ser-17 is modified to Phosphoserine. 4 ANK repeats span residues 52-81 (GTLKPLHCACMVSDADCVELLLEKGAEVNA), 85-113 (YNRTALHYAAEKDEACVEVLLEYGANPNA), 117-146 (NRDTPLHWAAFKNNAECVRALLESGASVNA), and 150-179 (NNDTPLSWAAMKGNLESVSILLDYGAEVRV). An SOCS box domain is found at 235–288 (QLCEKLTVLCSAPGTLKTLARYAVRRSLGLQYLPDAVKGLPLPASLKEYLLLLE).

This sequence belongs to the ankyrin SOCS box (ASB) family. Interacts with TBK1; this interaction promotes TBK1 proteasomal degradation. In terms of processing, phosphorylated by TBK1. As to expression, highest level of expression in skeletal muscle. Also expressed in heart, brain, placenta, liver, kidney and pancreas.

It localises to the cytoplasm. It participates in protein modification; protein ubiquitination. May be a substrate-recognition component of a SCF-like ECS (Elongin-Cullin-SOCS-box protein) E3 ubiquitin-protein ligase complex which mediates the ubiquitination and subsequent proteasomal degradation of target proteins. Inhibits IFN-beta production through the IRF3 signaling pathway by targeting TBK1 via 'Lys-48'-linked ubiquitination, leading to its proteasomal degradation. The chain is Ankyrin repeat and SOCS box protein 8 (ASB8) from Homo sapiens (Human).